The following is a 147-amino-acid chain: 3-dehydroquinate dehydratase (147 aa).

Residue Tyr24 is the Proton acceptor of the active site. Positions 75, 81, and 88 each coordinate substrate. His101 functions as the Proton donor in the catalytic mechanism. Substrate-binding positions include 102-103 (IS) and Arg112.

The protein belongs to the type-II 3-dehydroquinase family. As to quaternary structure, homododecamer.

The catalysed reaction is 3-dehydroquinate = 3-dehydroshikimate + H2O. It participates in metabolic intermediate biosynthesis; chorismate biosynthesis; chorismate from D-erythrose 4-phosphate and phosphoenolpyruvate: step 3/7. Catalyzes a trans-dehydration via an enolate intermediate. This Cereibacter sphaeroides (strain KD131 / KCTC 12085) (Rhodobacter sphaeroides) protein is 3-dehydroquinate dehydratase.